Consider the following 177-residue polypeptide: MWKANVWVLGEAAHGISGGTIIYQLLMFIILLALLRKFAWQPLMNIMKQREEHIANEIDQAEKRRQEAEKLLEEQRELMKQSRQEAQALIENARKLAEEQKEQIVASARAEAERVKEVAKKEIEREKEQAMAALREQVASLSVLIASKVIEKELTEQDQRKLIEAYIKDVQEAGGAR.

Residues 15–35 traverse the membrane as a helical segment; sequence GISGGTIIYQLLMFIILLALL.

Belongs to the ATPase B chain family. In terms of assembly, F-type ATPases have 2 components, F(1) - the catalytic core - and F(0) - the membrane proton channel. F(1) has five subunits: alpha(3), beta(3), gamma(1), delta(1), epsilon(1). F(0) has three main subunits: a(1), b(2) and c(10-14). The alpha and beta chains form an alternating ring which encloses part of the gamma chain. F(1) is attached to F(0) by a central stalk formed by the gamma and epsilon chains, while a peripheral stalk is formed by the delta and b chains.

It localises to the cell membrane. Functionally, f(1)F(0) ATP synthase produces ATP from ADP in the presence of a proton or sodium gradient. F-type ATPases consist of two structural domains, F(1) containing the extramembraneous catalytic core and F(0) containing the membrane proton channel, linked together by a central stalk and a peripheral stalk. During catalysis, ATP synthesis in the catalytic domain of F(1) is coupled via a rotary mechanism of the central stalk subunits to proton translocation. Its function is as follows. Component of the F(0) channel, it forms part of the peripheral stalk, linking F(1) to F(0). The sequence is that of ATP synthase subunit b from Geobacillus kaustophilus (strain HTA426).